A 626-amino-acid polypeptide reads, in one-letter code: Chaperone protein DnaK (626 aa).

Threonine 175 bears the Phosphothreonine; by autocatalysis mark. 3 disordered regions span residues 469–488 (DKGTGKEQSMTITGGSGLPK), 498–517 (AEAHEAEDKKRKEDAETRNQ), and 583–626 (AQQG…KDNK). Basic and acidic residues predominate over residues 498–516 (AEAHEAEDKKRKEDAETRN). The span at 609–626 (SDDDVVDAEVVDDDKDNK) shows a compositional bias: acidic residues.

It belongs to the heat shock protein 70 family.

Functionally, acts as a chaperone. This Bifidobacterium adolescentis (strain ATCC 15703 / DSM 20083 / NCTC 11814 / E194a) protein is Chaperone protein DnaK.